The sequence spans 2850 residues: Hornerin (2850 aa).

Positions 1 to 81 (MPKLLQGVIT…TEYLLMIFKL (81 aa)) are S-100-like. EF-hand domains follow at residues 13 to 48 (DVFY…LKNP) and 49 to 84 (NDPD…LVQA). T27, E32, D62, D64, N66, K68, and E73 together coordinate Ca(2+). 13 tandem repeats follow at residues 97-187 (SGSK…SDSH), 188-278 (QSSG…SSSG), 279-369 (SSSS…SGSG), 370-460 (HSSS…SGSG), 474-566 (HSSG…YGSG), 593-683 (QSSG…SGSG), 685-747 (SSSN…SSSG), 748-836 (LSSS…SASG), 839-875 (SSQG…SASH), 876-965 (HASG…SRSG), 966-1004 (QSSR…SGSG), 1007-1097 (PSPS…ASSG), and 1098-1188 (QSSS…SGSG). Residues 100–110 (KLRDDTHQHQE) show a composition bias toward basic and acidic residues. Disordered stretches follow at residues 100-154 (KLRD…GTES) and 166-2817 (SGQH…KGGS). Over residues 125–144 (SSFSHSSWSAGENDSYSRNV) the composition is skewed to polar residues. Low complexity-rich tracts occupy residues 167 to 192 (GQHN…SSGR) and 226 to 248 (GQSS…SQHG). Over residues 249-259 (SGSGHSSGYGQ) the composition is skewed to gly residues. Low complexity-rich tracts occupy residues 276–308 (SSGS…QSPS) and 317–421 (GHSS…SGSG). A compositionally biased stretch (gly residues) spans 422–433 (QSPGHGQRGSGS). Low complexity-rich tracts occupy residues 449-465 (SSSS…SSGF) and 473-482 (EHSSGYTQHG). Gly residues predominate over residues 483 to 493 (SGSGHSSGHGQ). Low complexity-rich tracts occupy residues 494–529 (HGSR…QSLG), 555–661 (SSSY…QSPS), 670–724 (GHSS…SHSS), 732–765 (RSGQ…SSGH), 782–806 (GSSS…SCGH), and 818–871 (GQHE…GQHE). Phosphoserine occurs at positions 659 and 661. Residues 884-900 (GSGSGQSPGHGQRGSGS) show a composition bias toward gly residues. S890 is modified (phosphoserine). Low complexity-rich tracts occupy residues 901-921 (GQSP…SSGR) and 931-996 (GFGH…SLGH). A phosphoserine mark is found at S993 and S1008. Composition is skewed to low complexity over residues 1019-1050 (GQSS…SSGL) and 1057-1115 (SGQS…SSGY). The segment covering 1116 to 1132 (GRQGSGSGQSPGHGQRG) has biased composition (gly residues). 2 stretches are compositionally biased toward low complexity: residues 1133 to 1156 (SGSR…SSGQ) and 1166 to 1184 (GFGH…SQHG). A compositionally biased stretch (gly residues) spans 1185 to 1195 (SGSGHSSGYGQ). The residue at position 1205 (R1205) is an Omega-N-methylarginine. 2 stretches are compositionally biased toward low complexity: residues 1211–1232 (SSSG…SSGH) and 1253–1276 (GHSS…PYES). Residues 1215–1305 (SSSHYGQHGS…AYSQHGSGSG (91 aa)) form repeat 14. The segment covering 1280–1301 (HSSVFGQHESGSGHSSAYSQHG) has biased composition (polar residues). 5 stretches are compositionally biased toward low complexity: residues 1309–1322 (SQGQ…QSST), 1331–1349 (GQSS…SSGY), 1370–1390 (GHSS…SSGR), 1400–1438 (GFGH…GQSS), and 1445–1466 (SSSG…SLGH). Tandem repeats lie at residues 1332-1422 (QSSS…SGSG), 1423-1474 (HSSS…SGSG), 1477-1567 (PSPS…ASSG), 1568-1658 (QSSS…SGSG), 1685-1775 (SSSR…SGSG), 1802-1892 (QSSS…SGSG), 1893-1944 (HSSS…SGSG), 1947-2037 (PSPS…ASSG), 2038-2128 (QSSS…SGSG), 2155-2245 (SSSR…SGSG), 2272-2362 (QSSS…SGSG), 2363-2414 (HSSS…SGSG), 2417-2507 (PSPS…ASSG), 2508-2598 (QSSS…SGSG), 2625-2715 (SSSH…SGSG), and 2716-2806 (HFCS…SGSG). Phosphoserine is present on residues S1463 and S1478. Composition is skewed to low complexity over residues 1489–1520 (GQSS…SSGL) and 1527–1585 (SGQS…SSGY). Residues 1586 to 1602 (GRQGSGSGQSPGHGQRG) show a composition bias toward gly residues. 2 stretches are compositionally biased toward low complexity: residues 1603 to 1626 (SGSR…SSGQ) and 1636 to 1654 (GFGH…SQHG). Positions 1655 to 1665 (SGSGHSSGYGQ) are enriched in gly residues. The segment covering 1682–1702 (SSRSSSRYGQHGSGSRQSSGH) has biased composition (low complexity). A phosphoserine mark is found at S1712 and S1714. Residues 1723 to 1746 (GHSSSHGQHGSGSGRSSSRGPYES) are compositionally biased toward low complexity. The span at 1750 to 1771 (HSSVFGQHESGSGHSSAYSQHG) shows a compositional bias: polar residues. Low complexity-rich tracts occupy residues 1779–1831 (SQGQ…QSPS), 1840–1860 (GHSS…SSGR), and 1870–1936 (GFGH…SLGH). S1829 and S1831 each carry phosphoserine. Residues S1933 and S1948 each carry the phosphoserine modification. 2 stretches are compositionally biased toward low complexity: residues 1959-1990 (GQSS…SSGL) and 1997-2055 (SGQS…SSGY). The span at 2056 to 2072 (GRQGSGSGQSPGHGQRG) shows a compositional bias: gly residues. 2 stretches are compositionally biased toward low complexity: residues 2073 to 2096 (SGSR…SSGQ) and 2106 to 2124 (GFGH…SQHG). Over residues 2125 to 2135 (SGSGHSSGYGQ) the composition is skewed to gly residues. 2 stretches are compositionally biased toward low complexity: residues 2151-2172 (SSSG…SSGH) and 2193-2216 (GHSS…PYES). Over residues 2220-2241 (HSSVFGQHESGSGHSSAYSQHG) the composition is skewed to polar residues. Low complexity-rich tracts occupy residues 2249-2301 (SQGQ…QSPS), 2310-2330 (GHSS…SSGR), 2340-2378 (GFGH…GQSS), and 2385-2406 (SSSG…SLGH). S2299 and S2301 each carry phosphoserine. Phosphoserine is present on residues S2403 and S2418. 2 stretches are compositionally biased toward low complexity: residues 2429-2460 (GQSS…SSGL) and 2467-2525 (SGQS…SSGY). A compositionally biased stretch (gly residues) spans 2526–2542 (GRQGSGSGQSPGHGQRG). Composition is skewed to low complexity over residues 2543 to 2566 (SGSR…SSGQ) and 2576 to 2594 (GFGH…SQHG). Over residues 2595-2605 (SGSGHSSGYGQ) the composition is skewed to gly residues. Residues 2621–2642 (SSSGSSSHYGQHGSGSRQSSGH) show a composition bias toward low complexity. Phosphoserine is present on residues S2652 and S2654. Low complexity predominate over residues 2663–2682 (GHSSSHGQHGSGSGRSSSRG). Residues 2698–2711 (ESGSGHSSAYSQHG) show a composition bias toward polar residues. Low complexity-rich tracts occupy residues 2719 to 2732 (SQGQ…QSST), 2741 to 2759 (GQSS…SSGY), and 2795 to 2816 (SSGY…CKGG).

Belongs to the S100-fused protein family. The protein in the N-terminal section; belongs to the S-100 family. Processed during the process of epidermal differentiation. In terms of processing, forms covalent cross-links mediated by transglutaminase TGM3, between glutamine and the epsilon-amino group of lysine residues (in vitro). As to expression, expressed in cornified epidermis, psoriatic and regenerating skin after wounding. Found in the upper granular layer and in the entire cornified layer of epidermis.

It is found in the cytoplasmic granule. In terms of biological role, component of the epidermal cornified cell envelopes. In Homo sapiens (Human), this protein is Hornerin (HRNR).